The primary structure comprises 346 residues: Tetraacyldisaccharide 4'-kinase (346 aa).

53–60 serves as a coordination point for ATP; the sequence is TCGGTGKT.

Belongs to the LpxK family.

It catalyses the reaction a lipid A disaccharide + ATP = a lipid IVA + ADP + H(+). The protein operates within glycolipid biosynthesis; lipid IV(A) biosynthesis; lipid IV(A) from (3R)-3-hydroxytetradecanoyl-[acyl-carrier-protein] and UDP-N-acetyl-alpha-D-glucosamine: step 6/6. Its function is as follows. Transfers the gamma-phosphate of ATP to the 4'-position of a tetraacyldisaccharide 1-phosphate intermediate (termed DS-1-P) to form tetraacyldisaccharide 1,4'-bis-phosphate (lipid IVA). The sequence is that of Tetraacyldisaccharide 4'-kinase from Bartonella tribocorum (strain CIP 105476 / IBS 506).